The chain runs to 177 residues: MSRVGKAPIALPKGAEVNFAGGLLTVKGPLGTLTQPIHSLVKVNTDNGTITFAPADESREANALQGTMRALTANMVKGVTTGFERKLNLVGVGYRASVQGTALKLQLGFSHDVIHEMPEGVKAETPTQTEIIIKGSDKQKVGQVAAEVRGYRPPEPYKGKGVRYADERVILKETKKK.

The protein belongs to the universal ribosomal protein uL6 family. Part of the 50S ribosomal subunit.

Its function is as follows. This protein binds to the 23S rRNA, and is important in its secondary structure. It is located near the subunit interface in the base of the L7/L12 stalk, and near the tRNA binding site of the peptidyltransferase center. This is Large ribosomal subunit protein uL6 from Ralstonia pickettii (strain 12J).